Consider the following 120-residue polypeptide: Phosphoribosyl-ATP pyrophosphatase (120 aa).

Residues 97–120 (REGTSGLVEKASRPAKKDSGTADS) are disordered. Over residues 106–120 (KASRPAKKDSGTADS) the composition is skewed to basic and acidic residues.

Belongs to the PRA-PH family.

It is found in the cytoplasm. It catalyses the reaction 1-(5-phospho-beta-D-ribosyl)-ATP + H2O = 1-(5-phospho-beta-D-ribosyl)-5'-AMP + diphosphate + H(+). The protein operates within amino-acid biosynthesis; L-histidine biosynthesis; L-histidine from 5-phospho-alpha-D-ribose 1-diphosphate: step 2/9. This chain is Phosphoribosyl-ATP pyrophosphatase, found in Rhodopirellula baltica (strain DSM 10527 / NCIMB 13988 / SH1).